We begin with the raw amino-acid sequence, 284 residues long: Transmembrane protein 163b (284 aa).

A disordered region spans residues methionine 1–alanine 44. The Cytoplasmic portion of the chain corresponds to methionine 1–alanine 83. Residues leucine 84 to valine 104 traverse the membrane as a helical segment. Over serine 105 to alanine 111 the chain is Extracellular. A helical transmembrane segment spans residues serine 112–tryptophan 132. The Cytoplasmic portion of the chain corresponds to arginine 133–arginine 145. Residues glutamate 146–valine 166 form a helical membrane-spanning segment. Residues lysine 167–aspartate 182 are Extracellular-facing. The helical transmembrane segment at phenylalanine 183–phenylalanine 203 threads the bilayer. Residues methionine 204–arginine 212 are Cytoplasmic-facing. A helical transmembrane segment spans residues alanine 213–isoleucine 233. Residues serine 234–serine 243 are Extracellular-facing. A helical transmembrane segment spans residues valine 244–valine 264. Residues lysine 265–glutamate 284 are Cytoplasmic-facing.

It belongs to the TMEM163 family.

The protein localises to the cytoplasmic vesicle. Its subcellular location is the secretory vesicle. It is found in the synaptic vesicle membrane. The protein resides in the early endosome membrane. It localises to the late endosome membrane. The protein localises to the lysosome membrane. Its subcellular location is the cell membrane. The enzyme catalyses Zn(2+)(in) = Zn(2+)(out). Functionally, zinc ion transporter that mediates zinc efflux and plays a crucial role in intracellular zinc homeostasis. Binds the divalent cations Zn(2+), Ni(2+), and to a minor extent Cu(2+). Is a functional modulator of P2X purinoceptors, including P2RX1, P2RX3, P2RX4 and P2RX7. Plays a role in central nervous system development and is required for myelination, and survival and proliferation of oligodendrocytes. In Danio rerio (Zebrafish), this protein is Transmembrane protein 163b.